The primary structure comprises 105 residues: Ribosomal silencing factor RsfS (105 aa).

Belongs to the Iojap/RsfS family. As to quaternary structure, interacts with ribosomal protein uL14 (rplN).

Its subcellular location is the cytoplasm. Functions as a ribosomal silencing factor. Interacts with ribosomal protein uL14 (rplN), blocking formation of intersubunit bridge B8. Prevents association of the 30S and 50S ribosomal subunits and the formation of functional ribosomes, thus repressing translation. The sequence is that of Ribosomal silencing factor RsfS from Escherichia coli O6:H1 (strain CFT073 / ATCC 700928 / UPEC).